Here is a 357-residue protein sequence, read N- to C-terminus: Elongation factor Ts (357 aa).

The tract at residues 82-85 (TDFV) is involved in Mg(2+) ion dislocation from EF-Tu.

This sequence belongs to the EF-Ts family.

The protein localises to the cytoplasm. In terms of biological role, associates with the EF-Tu.GDP complex and induces the exchange of GDP to GTP. It remains bound to the aminoacyl-tRNA.EF-Tu.GTP complex up to the GTP hydrolysis stage on the ribosome. The polypeptide is Elongation factor Ts (Campylobacter jejuni subsp. jejuni serotype O:23/36 (strain 81-176)).